A 736-amino-acid polypeptide reads, in one-letter code: Neprilysin-2 (736 aa).

Residues 1–19 lie on the Cytoplasmic side of the membrane; that stretch reads MRPDEEDGTTKSPGSRWTR. A helical; Signal-anchor for type II membrane protein membrane pass occupies residues 20–40; that stretch reads IWAIIALILLILFLLVLGAAI. Topologically, residues 41–736 are extracellular; that stretch reads YFYINYKDSS…MNPREKCRVW (696 aa). Residues 52-736 enclose the Peptidase M13 domain; it reads VCLSPGCIKT…MNPREKCRVW (685 aa). 5 disulfide bridges follow: C53/C58, C76/C721, C84/C681, C142/C399, and C608/C733. Residues 103–123 are a coiled coil; that stretch reads FENLGQDLEFALKELLDENDE. H571 is a binding site for Zn(2+). The active site involves E572. The Zn(2+) site is built by H575 and E633. The active-site Proton donor is the D637.

It belongs to the peptidase M13 family. The cofactor is Zn(2+). In terms of tissue distribution, expressed in muscle cells, GLR cells, SMB motor neurons and AIM interneurons.

The protein localises to the membrane. In terms of biological role, required for olfactory plasticity, which is the change from positive chemotaxis to dispersal after prolonged exposure to an odorant. Thought to antagonise snet-1 by degrading excess snet-1 peptides and thus enabling olfactory plasticity. This Caenorhabditis elegans protein is Neprilysin-2.